The chain runs to 455 residues: ATP-dependent protease ATPase subunit HslU (455 aa).

ATP is bound by residues Val23, Gly65–Glu70, Asp266, Glu333, and Arg405.

The protein belongs to the ClpX chaperone family. HslU subfamily. In terms of assembly, a double ring-shaped homohexamer of HslV is capped on each side by a ring-shaped HslU homohexamer. The assembly of the HslU/HslV complex is dependent on binding of ATP.

The protein resides in the cytoplasm. Functionally, ATPase subunit of a proteasome-like degradation complex; this subunit has chaperone activity. The binding of ATP and its subsequent hydrolysis by HslU are essential for unfolding of protein substrates subsequently hydrolyzed by HslV. HslU recognizes the N-terminal part of its protein substrates and unfolds these before they are guided to HslV for hydrolysis. The chain is ATP-dependent protease ATPase subunit HslU from Xanthomonas oryzae pv. oryzae (strain MAFF 311018).